We begin with the raw amino-acid sequence, 144 residues long: Small ribosomal subunit protein uS19 (144 aa).

This sequence belongs to the universal ribosomal protein uS19 family.

This chain is Small ribosomal subunit protein uS19 (rps15), found in Dictyostelium discoideum (Social amoeba).